Reading from the N-terminus, the 275-residue chain is Translation initiation factor 2 subunit alpha (275 aa).

Positions Gly-12–Arg-83 constitute an S1 motif domain.

This sequence belongs to the eIF-2-alpha family. In terms of assembly, heterotrimer composed of an alpha, a beta and a gamma chain.

Its function is as follows. eIF-2 functions in the early steps of protein synthesis by forming a ternary complex with GTP and initiator tRNA. The chain is Translation initiation factor 2 subunit alpha (eif2a) from Pyrococcus abyssi (strain GE5 / Orsay).